Here is a 302-residue protein sequence, read N- to C-terminus: Aspartate carbamoyltransferase catalytic subunit (302 aa).

Residues arginine 53 and threonine 54 each coordinate carbamoyl phosphate. Lysine 82 provides a ligand contact to L-aspartate. The carbamoyl phosphate site is built by arginine 103, histidine 131, and glutamine 134. Arginine 164 and arginine 223 together coordinate L-aspartate. Carbamoyl phosphate is bound by residues leucine 260 and proline 261.

The protein belongs to the aspartate/ornithine carbamoyltransferase superfamily. ATCase family. As to quaternary structure, heterooligomer of catalytic and regulatory chains.

The catalysed reaction is carbamoyl phosphate + L-aspartate = N-carbamoyl-L-aspartate + phosphate + H(+). Its pathway is pyrimidine metabolism; UMP biosynthesis via de novo pathway; (S)-dihydroorotate from bicarbonate: step 2/3. Functionally, catalyzes the condensation of carbamoyl phosphate and aspartate to form carbamoyl aspartate and inorganic phosphate, the committed step in the de novo pyrimidine nucleotide biosynthesis pathway. This chain is Aspartate carbamoyltransferase catalytic subunit, found in Methanococcus maripaludis (strain C5 / ATCC BAA-1333).